The sequence spans 199 residues: NADH-quinone oxidoreductase subunit I (199 aa).

4Fe-4S ferredoxin-type domains follow at residues 45 to 75 (LNRH…VEGA) and 91 to 120 (RVYQ…MSNE). [4Fe-4S] cluster is bound by residues cysteine 55, cysteine 58, cysteine 61, cysteine 65, cysteine 100, cysteine 103, cysteine 106, and cysteine 110. The tract at residues 164–199 (GTPAAHMLSGEDDAASETTLDRSDDHSATYEEAERP) is disordered. Residues 182-199 (TLDRSDDHSATYEEAERP) are compositionally biased toward basic and acidic residues.

This sequence belongs to the complex I 23 kDa subunit family. As to quaternary structure, NDH-1 is composed of 14 different subunits. Subunits NuoA, H, J, K, L, M, N constitute the membrane sector of the complex. [4Fe-4S] cluster serves as cofactor.

The protein localises to the cell membrane. It catalyses the reaction a quinone + NADH + 5 H(+)(in) = a quinol + NAD(+) + 4 H(+)(out). NDH-1 shuttles electrons from NADH, via FMN and iron-sulfur (Fe-S) centers, to quinones in the respiratory chain. The immediate electron acceptor for the enzyme in this species is believed to be ubiquinone. Couples the redox reaction to proton translocation (for every two electrons transferred, four hydrogen ions are translocated across the cytoplasmic membrane), and thus conserves the redox energy in a proton gradient. The sequence is that of NADH-quinone oxidoreductase subunit I from Acidothermus cellulolyticus (strain ATCC 43068 / DSM 8971 / 11B).